The chain runs to 102 residues: MSKLVISKERMYDVVRAPVITEKATMGSEFRQVTFKVPLDATKSEIKAAVEGIFGVKVTAVNTLIAKGKVKRFRGRPGVRSDVKKAVVTLAEGHSIDVTTGV.

Belongs to the universal ribosomal protein uL23 family. Part of the 50S ribosomal subunit. Contacts protein L29, and trigger factor when it is bound to the ribosome.

Its function is as follows. One of the early assembly proteins it binds 23S rRNA. One of the proteins that surrounds the polypeptide exit tunnel on the outside of the ribosome. Forms the main docking site for trigger factor binding to the ribosome. The polypeptide is Large ribosomal subunit protein uL23 (Paramagnetospirillum magneticum (strain ATCC 700264 / AMB-1) (Magnetospirillum magneticum)).